The chain runs to 348 residues: Small ribosomal subunit protein mS45 (348 aa).

Low complexity predominate over residues 37–57 (SCSSSSPQSSQPTTHQQQCSS). The segment at 37-63 (SCSSSSPQSSQPTTHQQQCSSFSTTAP) is disordered.

This sequence belongs to the mitochondrion-specific ribosomal protein mS45 family. As to quaternary structure, component of the mitochondrial small ribosomal subunit (mt-SSU). Mature N.crassa 74S mitochondrial ribosomes consist of a small (37S) and a large (54S) subunit. The 37S small subunit contains a 16S ribosomal RNA (16S mt-rRNA) and 32 different proteins. The 54S large subunit contains a 23S rRNA (23S mt-rRNA) and 42 different proteins.

It localises to the mitochondrion. Component of the mitochondrial ribosome (mitoribosome), a dedicated translation machinery responsible for the synthesis of mitochondrial genome-encoded proteins, including at least some of the essential transmembrane subunits of the mitochondrial respiratory chain. The mitoribosomes are attached to the mitochondrial inner membrane and translation products are cotranslationally integrated into the membrane. The polypeptide is Small ribosomal subunit protein mS45 (mrps35) (Neurospora crassa (strain ATCC 24698 / 74-OR23-1A / CBS 708.71 / DSM 1257 / FGSC 987)).